The primary structure comprises 391 residues: Shewanella-like protein phosphatase 2 (391 aa).

Mn(2+) contacts are provided by aspartate 61, histidine 63, aspartate 97, and asparagine 132. Residue histidine 133 is the Proton donor of the active site. Mn(2+) is bound by residues histidine 232 and histidine 295.

This sequence belongs to the metallophosphoesterase superfamily. SLP family. Mn(2+) is required as a cofactor. In terms of tissue distribution, expressed in roots and siliques (at protein level).

It localises to the cytoplasm. Its subcellular location is the cytosol. Functionally, shows phosphatase activity, hydrolyzing the artificial substrate para-nitrophenylphosphate (pNPP) in vitro. The protein is Shewanella-like protein phosphatase 2 of Arabidopsis thaliana (Mouse-ear cress).